The primary structure comprises 399 residues: Putative 8-amino-7-oxononanoate synthase (399 aa).

R24 is a binding site for substrate. G111–W112 is a binding site for pyridoxal 5'-phosphate. H141 provides a ligand contact to substrate. Residues S189, D214 to H217, and T243 to K246 contribute to the pyridoxal 5'-phosphate site. N6-(pyridoxal phosphate)lysine is present on K246. T360 is a substrate binding site.

The protein belongs to the class-II pyridoxal-phosphate-dependent aminotransferase family. BioF subfamily. In terms of assembly, homodimer. The cofactor is pyridoxal 5'-phosphate.

The catalysed reaction is 6-carboxyhexanoyl-[ACP] + L-alanine + H(+) = (8S)-8-amino-7-oxononanoate + holo-[ACP] + CO2. Its pathway is cofactor biosynthesis; biotin biosynthesis. Its function is as follows. Catalyzes the decarboxylative condensation of pimeloyl-[acyl-carrier protein] and L-alanine to produce 8-amino-7-oxononanoate (AON), [acyl-carrier protein], and carbon dioxide. The sequence is that of Putative 8-amino-7-oxononanoate synthase (bioF) from Bordetella bronchiseptica (strain ATCC BAA-588 / NCTC 13252 / RB50) (Alcaligenes bronchisepticus).